The primary structure comprises 247 residues: ATP synthase subunit a, chloroplastic (247 aa).

The next 5 membrane-spanning stretches (helical) occupy residues 38-58 (QVLI…VIAV), 95-115 (VPFI…GALL), 134-154 (INTT…AGLS), 199-219 (LVVV…VMFL), and 220-240 (GLFT…AYIG).

The protein belongs to the ATPase A chain family. In terms of assembly, F-type ATPases have 2 components, CF(1) - the catalytic core - and CF(0) - the membrane proton channel. CF(1) has five subunits: alpha(3), beta(3), gamma(1), delta(1), epsilon(1). CF(0) has four main subunits: a, b, b' and c.

Its subcellular location is the plastid. The protein localises to the chloroplast thylakoid membrane. In terms of biological role, key component of the proton channel; it plays a direct role in the translocation of protons across the membrane. This chain is ATP synthase subunit a, chloroplastic, found in Agrostis stolonifera (Creeping bentgrass).